The following is a 573-amino-acid chain: Delta 8-(E)-sphingolipid desaturase (573 aa).

The region spanning 2–77 is the Cytochrome b5 heme-binding domain; that stretch reads SRVLSRRDIA…FKIWKIGRID (76 aa). Residues His-37 and His-60 each contribute to the heme site. Residues 228-248 form a helical membrane-spanning segment; it reads LFGISFYLLSLKWFAISAICL. The short motif at 260–264 is the Histidine box-1 element; it reads HDAGH. Residues 273–293 traverse the membrane as a helical segment; that stretch reads VDNIIGMTVASWIGGLSLGWW. The Histidine box-2 signature appears at 297 to 301; that stretch reads HNVHH. 3 helical membrane-spanning segments follow: residues 353–372, 393–413, and 422–442; these read YLYY…LSWM, LAGL…KQMP, and VMIS…SHFA. The Histidine box-3 signature appears at 481–485; it reads QVIHH.

It belongs to the fatty acid desaturase type 1 family.

Its subcellular location is the membrane. The enzyme catalyses an N-acylsphing-4-enine + 2 Fe(II)-[cytochrome b5] + O2 + 2 H(+) = a (4E,8E)-4-sphinga-4,8-dienine ceramide + 2 Fe(III)-[cytochrome b5] + 2 H2O. Its pathway is lipid metabolism; sphingolipid metabolism. Delta(8)-fatty-acid desaturase which introduces a double bond at the 8-position in the long-chain base (LCB) of ceramides. Required for the formation of the di-unsaturated sphingoid base (E,E)-sphinga-4,8-dienine during glucosylceramide (GluCer) biosynthesis. This chain is Delta 8-(E)-sphingolipid desaturase, found in Kluyveromyces lactis (strain ATCC 8585 / CBS 2359 / DSM 70799 / NBRC 1267 / NRRL Y-1140 / WM37) (Yeast).